Consider the following 36-residue polypeptide: uncharacterized protein (36 aa).

This is an uncharacterized protein from Spiroplasma melliferum (SpV1).